The chain runs to 147 residues: MMKLNLFINAKETESYIDIHAPKMNDHVQSIINAVNDLDKSHTLVGYIDKEIHIINVSDVITFQVINKNVTAITSNQKFKLKLRLYELEKQLPQHFIRISKSEIVNKYYIEKLLLEPNGLIRMYLKDAHYTYSSRRYLKSIKERLSI.

In terms of domain architecture, HTH LytTR-type spans 44-147 (LVGYIDKEIH…LKSIKERLSI (104 aa)).

It is found in the cytoplasm. This is an uncharacterized protein from Staphylococcus aureus (strain MW2).